A 445-amino-acid polypeptide reads, in one-letter code: AVMGRNLALNIESRGYTVSVFNRSREKTEEVIAENPGKKLVPHYTVKEFVESLETPRRILLMVKAGAGTDSAIDSLKPYLDKGDIIIDGGNTFFQDTIRRNRELSADGFNFIGTGVSGGEEGALKGPSIMPGGQKEAYELVAPILEQIAARAEDGEPCVAYIGADGAGHYVKMVHNGIEYGDMQLIAEAYALLKGGLALSNEELATTFTEWNQGELSSYLIDITKDIFTKKDEEGKYLVDVILDEAANKGTGKWTSQSSLDLGEPLSLITESVFARYISSLKDQRVAASKVLTGPQAQPASDKAEFIEKVRRALYLGKIVSYAQGFSQLRAASNEYSWDLNYGEIAKIFRAGCIIRAQFLQKITDAYEENAGIANLLLAPYFKQIADEYQQALRDVVAYAVQNGIPVPTFSAAIAYYDSYRSAVLPANLIQAQRDYFGAHTYKRT.

NADP(+) contacts are provided by residues 1 to 4, 22 to 24, 63 to 65, and Asn-91; these read AVMG, NRS, and VKA. Substrate-binding positions include Asn-91 and 117–119; that span reads SGG. Residue Lys-172 is the Proton acceptor of the active site. A substrate-binding site is contributed by 175-176; that stretch reads HN. The active-site Proton donor is the Glu-179. Residues Tyr-180, Lys-249, Arg-276, Arg-434, and His-440 each contribute to the substrate site.

The protein belongs to the 6-phosphogluconate dehydrogenase family. As to quaternary structure, homodimer.

It catalyses the reaction 6-phospho-D-gluconate + NADP(+) = D-ribulose 5-phosphate + CO2 + NADPH. It participates in carbohydrate degradation; pentose phosphate pathway; D-ribulose 5-phosphate from D-glucose 6-phosphate (oxidative stage): step 3/3. Functionally, catalyzes the oxidative decarboxylation of 6-phosphogluconate to ribulose 5-phosphate and CO(2), with concomitant reduction of NADP to NADPH. In Raoultella terrigena (Klebsiella terrigena), this protein is 6-phosphogluconate dehydrogenase, decarboxylating (gnd).